The primary structure comprises 43 residues: Protein PsbN (43 aa).

A helical membrane pass occupies residues 5 to 27; sequence NLVTISISCLLVSLTGYAIYTSF.

It belongs to the PsbN family.

The protein localises to the plastid. It localises to the chloroplast thylakoid membrane. Functionally, may play a role in photosystem I and II biogenesis. This chain is Protein PsbN, found in Gnetum gnemon (Spanish joint-fir).